The chain runs to 380 residues: Crotonobetainyl-CoA reductase (380 aa).

It belongs to the acyl-CoA dehydrogenase family. In terms of assembly, homotetramer. It depends on FAD as a cofactor.

It is found in the cytoplasm. The catalysed reaction is 4-(trimethylamino)butanoyl-CoA + oxidized [electron-transfer flavoprotein] + H(+) = crotonobetainyl-CoA + reduced [electron-transfer flavoprotein]. The protein operates within amine and polyamine metabolism; carnitine metabolism. Its function is as follows. Catalyzes the reduction of crotonobetainyl-CoA to gamma-butyrobetainyl-CoA. The sequence is that of Crotonobetainyl-CoA reductase from Escherichia coli O6:K15:H31 (strain 536 / UPEC).